The primary structure comprises 91 residues: Protein xpaR7 (91 aa).

This chain is Protein xpaR7 (xpaR7), found in Bacillus licheniformis.